Reading from the N-terminus, the 464-residue chain is L-cysteine desulfhydrase-like protein lolT2 (464 aa).

An N6-(pyridoxal phosphate)lysine modification is found at lysine 227.

The protein belongs to the class-V pyridoxal-phosphate-dependent aminotransferase family. The cofactor is pyridoxal 5'-phosphate.

It functions in the pathway alkaloid biosynthesis. In terms of biological role, L-cysteine desulfhydrase-like protein; part of the gene cluster that mediates the biosynthesis of loline alkaloids, potent insecticidal agents composed of a pyrrolizidine ring system and an uncommon ether bridge linking carbons 2 and 7. Lolines are structurally differentiated by the various modifications of the L-amino group and include norloline, loline, N-methylloline, N-acetylloline, N-acetylnorloline, and N-formylloline. The first committed step is the condensation of O-acetyl-L-homoserine (derived from L-aspartic acid) and L-proline, probably catalyzed by the gamma-type pyridoxal 5'-phosphate(PLP)-dependent enzyme lolC, to give the diamino diacid, NACPP. Ensuing cyclization, decarboxylation, and acetylation steps yield 1-exo-acetamidopyrrolizidine (AcAP). LolO is required for installation of the ether bridge upon the pathway intermediate, 1-exo-acetamidopyrrolizidine (AcAP). In sequential 2-oxoglutarate- and O(2)-consuming steps, lolO removes hydrogens from C2 and C7 of AcAP to form both carbon-oxygen bonds in N-acetylnorloline (NANL), the precursor to all other lolines. The enzymes lolD, lolE, lolF and lolT have also been proposed to be involved in the ether-bridge installation. Further processing of the exocyclic moiety of NANL by fungal N-acetamidase (LolN), methyltransferase (LolM), and cytochrome P450 (LolP) enzymes, with occasional involvement of a plant acetyltransferase, generates the other known lolines. LolN transforms NANL to norlonine which is monomethylated and dimethylated to respectively lonine and N-methyllonine (NML) by lolM. LolP catalyzes hydroxylation of the methyl group in N-methylloline (NML) and further oxygenation to N-formylloline (NFL). A plant acetyltransferase is responsible for the acetylation of loline to form N-acetylloline (NAL). LolA might interact with aspartate kinase to prevent feedback inhibition of its activity by these end products and thereby promote production of L-homoserine from L-aspartate. In Epichloe uncinata (Endophyte fungus), this protein is L-cysteine desulfhydrase-like protein lolT2.